Reading from the N-terminus, the 319-residue chain is L-lactate dehydrogenase (319 aa).

Residues Val-17, Asp-38, Lys-43, Tyr-69, and 83–84 contribute to the NAD(+) site; that span reads GA. Residues Gln-86 and Arg-92 each coordinate substrate. NAD(+) is bound by residues Thr-105, 122–124, and Ser-147; that span reads ATN. 124–127 is a substrate binding site; sequence NPVD. 152–155 lines the substrate pocket; it reads DTAR. Residues Arg-157 and His-172 each contribute to the beta-D-fructose 1,6-bisphosphate site. His-179 acts as the Proton acceptor in catalysis. Tyr-224 bears the Phosphotyrosine mark. Thr-233 contributes to the substrate binding site.

The protein belongs to the LDH/MDH superfamily. LDH family. Homotetramer.

It is found in the cytoplasm. It carries out the reaction (S)-lactate + NAD(+) = pyruvate + NADH + H(+). It participates in fermentation; pyruvate fermentation to lactate; (S)-lactate from pyruvate: step 1/1. With respect to regulation, allosterically activated by fructose 1,6-bisphosphate (FBP). Its function is as follows. Catalyzes the conversion of lactate to pyruvate. In Geobacillus sp. (strain WCH70), this protein is L-lactate dehydrogenase.